The following is a 349-amino-acid chain: Hydroxymethylglutaryl-CoA synthase (349 aa).

Asp-29 contributes to the (3S)-3-hydroxy-3-methylglutaryl-CoA binding site. Glu-81 serves as the catalytic Proton donor/acceptor. Cys-113, Ser-154, Thr-202, and His-235 together coordinate (3S)-3-hydroxy-3-methylglutaryl-CoA. Residue Cys-113 is the Acyl-thioester intermediate of the active site. The active-site Proton donor/acceptor is the His-235. Arg-240 lines the CoA pocket. (3S)-3-hydroxy-3-methylglutaryl-CoA contacts are provided by Arg-244, Asn-267, and Ser-297.

This sequence belongs to the thiolase-like superfamily. Archaeal HMG-CoA synthase family. As to quaternary structure, interacts with acetoacetyl-CoA thiolase that catalyzes the precedent step in the pathway and with a DUF35 protein. The acetoacetyl-CoA thiolase/HMG-CoA synthase complex channels the intermediate via a fused CoA-binding site, which allows for efficient coupling of the endergonic thiolase reaction with the exergonic HMGCS reaction.

The catalysed reaction is acetoacetyl-CoA + acetyl-CoA + H2O = (3S)-3-hydroxy-3-methylglutaryl-CoA + CoA + H(+). It functions in the pathway metabolic intermediate biosynthesis; (R)-mevalonate biosynthesis; (R)-mevalonate from acetyl-CoA: step 2/3. Catalyzes the condensation of acetyl-CoA with acetoacetyl-CoA to form 3-hydroxy-3-methylglutaryl-CoA (HMG-CoA). Functions in the mevalonate (MVA) pathway leading to isopentenyl diphosphate (IPP), a key precursor for the biosynthesis of isoprenoid compounds that are building blocks of archaeal membrane lipids. In Pyrobaculum arsenaticum (strain DSM 13514 / JCM 11321 / PZ6), this protein is Hydroxymethylglutaryl-CoA synthase.